Consider the following 128-residue polypeptide: Arginine decarboxylase proenzyme (128 aa).

Catalysis depends on Ser-76, which acts as the Schiff-base intermediate with substrate; via pyruvic acid. Ser-76 is modified (pyruvic acid (Ser); by autocatalysis). The Proton acceptor; for processing activity role is filled by His-81. Cys-96 (proton donor; for catalytic activity) is an active-site residue.

The protein belongs to the prokaryotic AdoMetDC family. Type 1 subfamily. Heterooctamer of four alpha and four beta chains arranged as a tetramer of alpha/beta heterodimers. Requires pyruvate as cofactor. Is synthesized initially as an inactive proenzyme. Formation of the active enzyme involves a self-maturation process in which the active site pyruvoyl group is generated from an internal serine residue via an autocatalytic post-translational modification. Two non-identical subunits are generated from the proenzyme in this reaction, and the pyruvate is formed at the N-terminus of the alpha chain, which is derived from the carboxyl end of the proenzyme. The post-translation cleavage follows an unusual pathway, termed non-hydrolytic serinolysis, in which the side chain hydroxyl group of the serine supplies its oxygen atom to form the C-terminus of the beta chain, while the remainder of the serine residue undergoes an oxidative deamination to produce ammonia and the pyruvoyl group blocking the N-terminus of the alpha chain.

The catalysed reaction is L-arginine + H(+) = agmatine + CO2. It functions in the pathway amine and polyamine biosynthesis; agmatine biosynthesis; agmatine from L-arginine: step 1/1. Specifically catalyzes the decarboxylation of L-arginine to agmatine. Has no S-adenosylmethionine decarboxylase (AdoMetDC) activity. This chain is Arginine decarboxylase proenzyme, found in Sulfurisphaera tokodaii (strain DSM 16993 / JCM 10545 / NBRC 100140 / 7) (Sulfolobus tokodaii).